A 218-amino-acid polypeptide reads, in one-letter code: Ribose-5-phosphate isomerase A (218 aa).

Residues 28–31 (TGST), 81–84 (DGAD), and 94–97 (KGGG) contribute to the substrate site. Catalysis depends on glutamate 103, which acts as the Proton acceptor. Substrate is bound at residue lysine 121.

It belongs to the ribose 5-phosphate isomerase family. Homodimer.

It catalyses the reaction aldehydo-D-ribose 5-phosphate = D-ribulose 5-phosphate. Its pathway is carbohydrate degradation; pentose phosphate pathway; D-ribose 5-phosphate from D-ribulose 5-phosphate (non-oxidative stage): step 1/1. Catalyzes the reversible conversion of ribose-5-phosphate to ribulose 5-phosphate. The sequence is that of Ribose-5-phosphate isomerase A from Colwellia psychrerythraea (strain 34H / ATCC BAA-681) (Vibrio psychroerythus).